The chain runs to 149 residues: Transcriptional repressor NrdR (149 aa).

Residues 3–34 (CPFCGHAATQVIDTRMSEEGDTVRRRRRCESC) fold into a zinc finger. The ATP-cone domain occupies 49-139 (PAVVKKNGSR…VYRSFEDVSE (91 aa)).

This sequence belongs to the NrdR family. Requires Zn(2+) as cofactor.

Negatively regulates transcription of bacterial ribonucleotide reductase nrd genes and operons by binding to NrdR-boxes. The protein is Transcriptional repressor NrdR of Ralstonia nicotianae (strain ATCC BAA-1114 / GMI1000) (Ralstonia solanacearum).